A 397-amino-acid polypeptide reads, in one-letter code: GTPase Obg (397 aa).

Residues 1 to 159 enclose the Obg domain; that stretch reads MKFVDEAEIR…RMLKLELMLL (159 aa). The tract at residues 22 to 44 is disordered; the sequence is SFRREKYVPDGGPDGGDGGDGGS. Positions 33 to 43 are enriched in gly residues; that stretch reads GPDGGDGGDGG. An OBG-type G domain is found at 160 to 333; that stretch reads ADVGLLGMPN…LCIKVMDFIE (174 aa). GTP-binding positions include 166–173, 191–195, 213–216, 283–286, and 314–316; these read GMPNAGKS, FTTLV, DIPG, NKVD, and SAV. Mg(2+)-binding residues include serine 173 and threonine 193. The disordered stretch occupies residues 359–389; it reads TVENYEDDDDFDDDDDDDFDGDDDDDFDGDD. Residues 361–389 are compositionally biased toward acidic residues; that stretch reads ENYEDDDDFDDDDDDDFDGDDDDDFDGDD.

It belongs to the TRAFAC class OBG-HflX-like GTPase superfamily. OBG GTPase family. Monomer. Requires Mg(2+) as cofactor.

It localises to the cytoplasm. An essential GTPase which binds GTP, GDP and possibly (p)ppGpp with moderate affinity, with high nucleotide exchange rates and a fairly low GTP hydrolysis rate. Plays a role in control of the cell cycle, stress response, ribosome biogenesis and in those bacteria that undergo differentiation, in morphogenesis control. The sequence is that of GTPase Obg from Pseudoalteromonas atlantica (strain T6c / ATCC BAA-1087).